Reading from the N-terminus, the 425-residue chain is Adenylosuccinate synthetase (425 aa).

Residues 12–18 (GDEGKGK) and 40–42 (GHT) contribute to the GTP site. Asp13 serves as the catalytic Proton acceptor. 2 residues coordinate Mg(2+): Asp13 and Gly40. Residues 13–16 (DEGK), 38–41 (NAGH), Thr130, Arg144, Gln225, Thr240, and Arg304 each bind IMP. His41 functions as the Proton donor in the catalytic mechanism. 300-306 (ATTGRPR) lines the substrate pocket. Residues Arg306, 332-334 (KLD), and 414-416 (SVG) each bind GTP.

Belongs to the adenylosuccinate synthetase family. In terms of assembly, homodimer. Requires Mg(2+) as cofactor.

Its subcellular location is the cytoplasm. It carries out the reaction IMP + L-aspartate + GTP = N(6)-(1,2-dicarboxyethyl)-AMP + GDP + phosphate + 2 H(+). The protein operates within purine metabolism; AMP biosynthesis via de novo pathway; AMP from IMP: step 1/2. In terms of biological role, plays an important role in the de novo pathway of purine nucleotide biosynthesis. Catalyzes the first committed step in the biosynthesis of AMP from IMP. The polypeptide is Adenylosuccinate synthetase (Desulfovibrio desulfuricans (strain ATCC 27774 / DSM 6949 / MB)).